A 362-amino-acid polypeptide reads, in one-letter code: MNQVYNFSAGPAMLPAEVLRRAEQELCNWHGLGTSVMEISHRSKEFIAVAAEAEKDLRDLLAIPENYNVLFCHGGARGQFSALPQNLLGDKSTADYIVSGYWSECAAKEAEKYCTPNIIDIRSNTDGITSVKPMNEWALSSDAAYVHYCPNETIEGTAIFEEPDFGDDKIVIADYSSTILSAPIDVSRYGVIYAGAQKNIGPAGITVVIIREDLLGKAHKHIPSILDYTVQVKADSMYNTPPTFAWYLSGMVFKWLKEQGGLQEISKRNLAKAELLYRAIDNSNLYINRVALQNRSIMNVPFQLVNPALDGKFLEEAYAHGLHALKGHKVAGGARASIYNAMSYEGVKALVEFMADFERRNG.

Residue Arg42 participates in L-glutamate binding. Pyridoxal 5'-phosphate is bound by residues 76 to 77 (AR), Trp102, Thr153, Asp174, and Gln197. Lys198 is subject to N6-(pyridoxal phosphate)lysine. Residue 239–240 (NT) coordinates pyridoxal 5'-phosphate.

This sequence belongs to the class-V pyridoxal-phosphate-dependent aminotransferase family. SerC subfamily. As to quaternary structure, homodimer. Requires pyridoxal 5'-phosphate as cofactor.

Its subcellular location is the cytoplasm. It carries out the reaction O-phospho-L-serine + 2-oxoglutarate = 3-phosphooxypyruvate + L-glutamate. The catalysed reaction is 4-(phosphooxy)-L-threonine + 2-oxoglutarate = (R)-3-hydroxy-2-oxo-4-phosphooxybutanoate + L-glutamate. It functions in the pathway amino-acid biosynthesis; L-serine biosynthesis; L-serine from 3-phospho-D-glycerate: step 2/3. It participates in cofactor biosynthesis; pyridoxine 5'-phosphate biosynthesis; pyridoxine 5'-phosphate from D-erythrose 4-phosphate: step 3/5. Its function is as follows. Catalyzes the reversible conversion of 3-phosphohydroxypyruvate to phosphoserine and of 3-hydroxy-2-oxo-4-phosphonooxybutanoate to phosphohydroxythreonine. This chain is Phosphoserine aminotransferase, found in Xenorhabdus nematophila (strain ATCC 19061 / DSM 3370 / CCUG 14189 / LMG 1036 / NCIMB 9965 / AN6).